Consider the following 443-residue polypeptide: MDPLNLSWYDDDLESQNWSRPFNGSEGKPGKPHYNYYAMLLTLLIFIIVFGNVLVCMAVSREKALQTTTNYLIVSLAVADLLVATLVMPWVVYLEVVGEWKFSRIHCDIFVTLDVMMCTASILNLCAISIDRYTAVAMPMLYNTRYSSKRRVTVMIAIVWVLSFTISCPLLFGLNNTDQNECIIANPAFVVYSSIVSFYVPFIVTLLVYIKIYIVLRRRRKRVNTERSSRAFRANLKAPLKGNCTHPEDMKLCTVIMKSNGSFPVNRRRVEAARRAQELEMEMLSSTSPPERTRYSPIPPSHHQLTLPDPSHHGLHSTADSPAKPEKNGHAKDHPKIAKIFEIQSMPNGKTRTSLKTMSRRKLSQQKEKKATQMLAIVLGVFIICWLPFFITHILNIHCECNIPPVLYSAFTWLGYVNSAVNPIIYTTFNIEFRKAFLKILHC.

The Extracellular segment spans residues 1-37; the sequence is MDPLNLSWYDDDLESQNWSRPFNGSEGKPGKPHYNYY. 3 N-linked (GlcNAc...) asparagine glycosylation sites follow: Asn5, Asn17, and Asn23. The helical transmembrane segment at 38–60 threads the bilayer; it reads AMLLTLLIFIIVFGNVLVCMAVS. Topologically, residues 61–70 are cytoplasmic; sequence REKALQTTTN. A helical membrane pass occupies residues 71-93; that stretch reads YLIVSLAVADLLVATLVMPWVVY. At 94–108 the chain is on the extracellular side; the sequence is LEVVGEWKFSRIHCD. The cysteines at positions 107 and 182 are disulfide-linked. A helical membrane pass occupies residues 109–130; it reads IFVTLDVMMCTASILNLCAISI. At 131 to 151 the chain is on the cytoplasmic side; the sequence is DRYTAVAMPMLYNTRYSSKRR. Residues 152–172 traverse the membrane as a helical segment; that stretch reads VTVMIAIVWVLSFTISCPLLF. Residues 173 to 188 lie on the Extracellular side of the membrane; it reads GLNNTDQNECIIANPA. The chain crosses the membrane as a helical span at residues 189–213; sequence FVVYSSIVSFYVPFIVTLLVYIKIY. The segment at 211–373 is interaction with PPP1R9B; sequence KIYIVLRRRR…SQQKEKKATQ (163 aa). The Cytoplasmic portion of the chain corresponds to 214 to 373; the sequence is IVLRRRRKRV…SQQKEKKATQ (160 aa). The tract at residues 282 to 332 is disordered; it reads EMLSSTSPPERTRYSPIPPSHHQLTLPDPSHHGLHSTADSPAKPEKNGHAK. Positions 323–332 are enriched in basic and acidic residues; that stretch reads AKPEKNGHAK. A helical membrane pass occupies residues 374-395; that stretch reads MLAIVLGVFIICWLPFFITHIL. Over 396-409 the chain is Extracellular; it reads NIHCECNIPPVLYS. A disulfide bond links Cys399 and Cys401. The helical transmembrane segment at 410–431 threads the bilayer; it reads AFTWLGYVNSAVNPIIYTTFNI. Residues 432–443 are Cytoplasmic-facing; the sequence is EFRKAFLKILHC. Cys443 is lipidated: S-palmitoyl cysteine.

The protein belongs to the G-protein coupled receptor 1 family. In terms of assembly, forms homo- and heterooligomers with DRD4. The interaction with DRD4 may modulate agonist-induced downstream signaling. Interacts with CADPS and CADPS2. Interacts with GPRASP1, PPP1R9B and CLIC6. Interacts with ARRB2. Interacts with HTR2A. Interacts with DRD1. Interacts with KCNA2. Post-translationally, palmitoylated. Palmitoylation which is required for proper localization to the plasma membrane and stability of the receptor could be carried on by ZDHHC4, ZDHHC3 and ZDHHC8.

It localises to the cell membrane. The protein resides in the golgi apparatus membrane. Dopamine receptor whose activity is mediated by G proteins which inhibit adenylyl cyclase. Positively regulates postnatal regression of retinal hyaloid vessels via suppression of VEGFR2/KDR activity, downstream of OPN5. This is D(2) dopamine receptor (DRD2) from Canis lupus familiaris (Dog).